The chain runs to 372 residues: D-alanine--D-alanine ligase (372 aa).

The region spanning 145–349 (KTVLRAGGIP…CPNLLDQLIE (205 aa)) is the ATP-grasp domain. Residue 176 to 231 (DRWGTSELFVKAVSLGSSVATLPVKTETEFTKAVKEVFRYDDRLMVEPRIRGREIE) coordinates ATP. Aspartate 303, glutamate 316, and asparagine 318 together coordinate Mg(2+).

It belongs to the D-alanine--D-alanine ligase family. Mg(2+) is required as a cofactor. Requires Mn(2+) as cofactor.

The protein resides in the cytoplasm. It catalyses the reaction 2 D-alanine + ATP = D-alanyl-D-alanine + ADP + phosphate + H(+). It participates in cell wall biogenesis; peptidoglycan biosynthesis. Functionally, cell wall formation. The protein is D-alanine--D-alanine ligase of Coxiella burnetii (strain Dugway 5J108-111).